We begin with the raw amino-acid sequence, 151 residues long: FAD synthase (151 aa).

ATP contacts are provided by residues 12-13, 17-20, D97, and Y125; these read TF and HPGH.

This sequence belongs to the archaeal FAD synthase family. In terms of assembly, homodimer. A divalent metal cation is required as a cofactor.

It carries out the reaction FMN + ATP + H(+) = FAD + diphosphate. Its pathway is cofactor biosynthesis; FAD biosynthesis; FAD from FMN: step 1/1. In terms of biological role, catalyzes the transfer of the AMP portion of ATP to flavin mononucleotide (FMN) to produce flavin adenine dinucleotide (FAD) coenzyme. This chain is FAD synthase, found in Methanococcus vannielii (strain ATCC 35089 / DSM 1224 / JCM 13029 / OCM 148 / SB).